The following is a 555-amino-acid chain: Potassium-transporting ATPase potassium-binding subunit (555 aa).

The next 10 helical transmembrane spans lie at 2-22 (IWVAVVITMLLFILVAKPTGI), 60-80 (QYALSLVLLNGFMIVVVYFIF), 130-150 (IGITFLMFAAPATTLALVMAF), 173-193 (VFLPIAFVTALVFVALGVPQT), 246-266 (MSNILQMMLMMLLPTALPFTY), 278-298 (ILFVSLFMVFLLGFITITTSE), 374-394 (AGFVNIIMYAIIAVFISGLMV), 412-432 (LIAVTILFHPLLILGFSALAL), 483-503 (LVMFLGRYFSLVTMLAVAASL), and 525-545 (GIFIGTIVIVGALTFFPMLVL).

Belongs to the KdpA family. As to quaternary structure, the system is composed of three essential subunits: KdpA, KdpB and KdpC.

The protein resides in the cell membrane. Part of the high-affinity ATP-driven potassium transport (or Kdp) system, which catalyzes the hydrolysis of ATP coupled with the electrogenic transport of potassium into the cytoplasm. This subunit binds the extracellular potassium ions and delivers the ions to the membrane domain of KdpB through an intramembrane tunnel. In Bacillus cereus (strain AH820), this protein is Potassium-transporting ATPase potassium-binding subunit.